The following is a 149-amino-acid chain: Small ribosomal subunit protein bS16 (149 aa).

The tract at residues 115–149 is disordered; it reads KLKAAKSEADAKAKAEAEAAATEEAPAEEPAAEAE. The span at 119-131 shows a compositional bias: basic and acidic residues; the sequence is AKSEADAKAKAEA. A compositionally biased stretch (acidic residues) spans 139–149; the sequence is APAEEPAAEAE.

It belongs to the bacterial ribosomal protein bS16 family.

This Bifidobacterium adolescentis (strain ATCC 15703 / DSM 20083 / NCTC 11814 / E194a) protein is Small ribosomal subunit protein bS16.